The sequence spans 1131 residues: Probable chloride channel protein UM03490-D (1131 aa).

12 consecutive transmembrane segments (helical) span residues 137–157, 206–226, 305–325, 341–361, 380–397, 414–434, 485–505, 518–538, 577–597, 603–623, 643–663, and 680–702; these read GVIV…SLAT, VTVT…PILP, FPAW…CAHL, IKCI…TLAI, GPAV…ASFF, SSAA…LFSL, FEIM…AFVI, YLVK…AFVG, MVNS…VSYG, GIFV…GILV, VPCI…LAGV, and ALTY…DWFS. 2 disordered regions span residues 815–835 and 858–928; these read DGVE…LSVA and ATGA…AGGG. Over residues 866–877 the composition is skewed to low complexity; the sequence is GLGSTSATGVAS. The 57-residue stretch at 944–1000 folds into the CBS domain; sequence IDPTPLIVQPGMPLETVMDMFKNLGPRVILVVEYGRLSGLVTVKDVLKRIAMQEKAE. Residues 1061–1078 show a composition bias toward low complexity; that stretch reads RASASRGGAPGSQAGQAR. Residues 1061-1131 are disordered; the sequence is RASASRGGAP…VLGAQDDDDE (71 aa). Residues 1104 to 1113 are compositionally biased toward polar residues; sequence STRQTSATKN.

Belongs to the chloride channel (TC 2.A.49) family.

Its subcellular location is the membrane. Its function is as follows. Voltage-gated chloride channel. The sequence is that of Probable chloride channel protein UM03490-D from Mycosarcoma maydis (Corn smut fungus).